We begin with the raw amino-acid sequence, 390 residues long: Oxygen-dependent coproporphyrinogen-III oxidase (390 aa).

The tract at residues 131–140 (VLQDGDVFEK) is important for dimerization. Ser181 lines the substrate pocket. The active-site Proton donor is His195. Residues 197–199 (NYR) and 348–353 (GARYES) each bind substrate. Residues 329 to 365 (YVEFNLIYDRGTKFGLYTPGARYESILMSLPLHARWE) are important for dimerization.

It belongs to the aerobic coproporphyrinogen-III oxidase family. As to quaternary structure, homodimer.

The catalysed reaction is coproporphyrinogen III + O2 + 2 H(+) = protoporphyrinogen IX + 2 CO2 + 2 H2O. It participates in porphyrin-containing compound metabolism; protoporphyrin-IX biosynthesis; protoporphyrinogen-IX from coproporphyrinogen-III (O2 route): step 1/1. Its function is as follows. Involved in the heme biosynthesis. Catalyzes the aerobic oxidative decarboxylation of propionate groups of rings A and B of coproporphyrinogen-III to yield the vinyl groups in protoporphyrinogen-IX. The chain is Oxygen-dependent coproporphyrinogen-III oxidase (Coprox) from Drosophila melanogaster (Fruit fly).